An 85-amino-acid polypeptide reads, in one-letter code: Cell division topological specificity factor (85 aa).

This sequence belongs to the MinE family.

In terms of biological role, prevents the cell division inhibition by proteins MinC and MinD at internal division sites while permitting inhibition at polar sites. This ensures cell division at the proper site by restricting the formation of a division septum at the midpoint of the long axis of the cell. This Cellvibrio japonicus (strain Ueda107) (Pseudomonas fluorescens subsp. cellulosa) protein is Cell division topological specificity factor.